The chain runs to 322 residues: Hapalindole dimethylallyltransferase (322 aa).

The dimethylallyl diphosphate site is built by Arg46, Arg60, Lys115, Asn166, Tyr168, Arg221, Tyr225, and Lys275.

Belongs to the aromatic prenyltransferase family.

It catalyses the reaction hapalindole G + dimethylallyl diphosphate = ambiguine A + diphosphate. It carries out the reaction hapalindole U + dimethylallyl diphosphate + H(+) = ambiguine H + diphosphate. Activity is slightly increased in the presence of Mg(2+). Functionally, prenyltransferase involved in the biosynthesis of ambiguines, a family of hapalindole-type alkaloids. Catalyzes the reverse prenylation of hapalindole G or U at the C2 position with dimethylallyl diphosphate (DMAPP) to generate ambiguine A or H, respectively. In addition, accepts hapalindole A, an epimer of hapalindole G, and catalyzes normal prenylation at its C2 position. The chain is Hapalindole dimethylallyltransferase from Fischerella ambigua (strain UTEX 1903).